A 184-amino-acid chain; its full sequence is Photosystem I assembly protein Ycf4 (184 aa).

The next 2 helical transmembrane spans lie at 19–39 (ISNFCWAFILFLGSLGFLLVG) and 57–77 (IIFFPQGLVMSFYGIAGLFIS).

It belongs to the Ycf4 family.

It localises to the plastid. The protein localises to the chloroplast thylakoid membrane. Its function is as follows. Seems to be required for the assembly of the photosystem I complex. This chain is Photosystem I assembly protein Ycf4, found in Nicotiana sylvestris (Wood tobacco).